The sequence spans 353 residues: GDSL esterase/lipase APG (353 aa).

An N-terminal signal peptide occupies residues 1-25 (MDRCTSSFLLLTLVSTLSILQISFA). Catalysis depends on S37, which acts as the Nucleophile. N-linked (GlcNAc...) asparagine glycosylation is found at N197 and N320. Residues D328 and H331 contribute to the active site.

It belongs to the 'GDSL' lipolytic enzyme family.

It localises to the secreted. This is GDSL esterase/lipase APG (APG) from Arabidopsis thaliana (Mouse-ear cress).